The sequence spans 471 residues: Retinoic acid receptor RXR-beta-A (471 aa).

The disordered stretch occupies residues methionine 1–methionine 34. The modulating stretch occupies residues methionine 1 to lysine 102. Over residues proline 10–proline 25 the composition is skewed to low complexity. A DNA-binding region (nuclear receptor) is located at residues lysine 122 to aspartate 197. 2 consecutive NR C4-type zinc fingers follow at residues cysteine 125–cysteine 145 and cysteine 161–cysteine 185. The span at glutamine 196–glutamate 216 shows a compositional bias: basic and acidic residues. Positions glutamine 196–glutamate 226 are disordered. A hinge region spans residues glutamate 198–serine 221. The NR LBD domain occupies asparagine 224–proline 467.

The protein belongs to the nuclear hormone receptor family. NR2 subfamily. Homodimer. Heterodimer; with a rar molecule. Binds DNA preferentially as a rar/rxr heterodimer. Heterodimerizes with rarga. In terms of tissue distribution, shows uniform expression from the blastula to mid-gastrula stages. At 12 hours post-fertilization (hpf), expressed ubiquitously but more weakly. At 24 hpf, restricted to the ventral diencephalon, pharangeal endoderm and trunk and tail mesoderm; mesoderm expression is in medial cells of each somite along the dorsoventral axis, forming stripes. At 48 hpf, expressed in forebrain, eye, midbrain and anterior hindbrain.

Its subcellular location is the nucleus. Its function is as follows. Receptor for retinoic acid. Retinoic acid receptors bind as heterodimers to their target response elements in response to their ligands, all-trans or 9-cis retinoic acid, and regulate gene expression in various biological processes. The rar/rxr heterodimers bind to the retinoic acid response elements (RARE) composed of tandem 5'-AGGTCA-3' sites known as DR1-DR5. The high affinity ligand for rxrs is 9-cis retinoic acid. This chain is Retinoic acid receptor RXR-beta-A (rxrba), found in Danio rerio (Zebrafish).